Here is a 397-residue protein sequence, read N- to C-terminus: DnaJ homolog subfamily A member 1 (397 aa).

A J domain is found at Thr-6 to Gly-68. Lys-66 carries the N6-acetyllysine modification. The residue at position 83 (Ser-83) is a Phosphoserine. A CR-type zinc finger spans residues Gly-121–Lys-205. Zn(2+) is bound by residues Cys-134, Cys-137, Cys-150, Cys-153, Cys-177, Cys-180, Cys-193, and Cys-196. CXXCXGXG motif repeat units lie at residues Cys-134–Gly-141, Cys-150–Gly-157, Cys-177–Gly-184, and Cys-193–Lys-200. Position 335 is a phosphoserine (Ser-335). The disordered stretch occupies residues Val-352–Ser-397. Acidic residues predominate over residues Glu-353–Asp-365. Tyr-381 bears the Phosphotyrosine mark. Cys-394 carries the cysteine methyl ester modification. Cys-394 carries the S-farnesyl cysteine lipid modification. Positions Gln-395–Ser-397 are cleaved as a propeptide — removed in mature form.

As to quaternary structure, identified in a complex with HSPA1B and BAX. Interacts with RNF207.

The protein localises to the membrane. It is found in the cytoplasm. The protein resides in the microsome. It localises to the mitochondrion. Its subcellular location is the nucleus. The protein localises to the perinuclear region. Functionally, co-chaperone for HSPA8/Hsc70. Plays a role in protein transport into mitochondria via its role as co-chaperone. Functions as co-chaperone for HSPA1B and negatively regulates the translocation of BAX from the cytosol to mitochondria in response to cellular stress, thereby protecting cells against apoptosis. Stimulates ATP hydrolysis, but not the folding of unfolded proteins mediated by HSPA1A (in vitro). Promotes apoptosis in response to cellular stress mediated by exposure to anisomycin or UV. The sequence is that of DnaJ homolog subfamily A member 1 (DNAJA1) from Chlorocebus aethiops (Green monkey).